A 218-amino-acid polypeptide reads, in one-letter code: DNA endonuclease I-CeuI (218 aa).

Residues Gly-65 and Glu-66 each contribute to the Mg(2+) site. An interaction with DNA region spans residues 71-75 (ISTKK). Asp-86 lines the Mg(2+) pocket. Interaction with DNA regions lie at residues 90 to 94 (NVTQH), 114 to 116 (RHK), and 191 to 199 (KQQGQSNEG).

This sequence belongs to the LAGLIDADG endonuclease family. As to quaternary structure, homodimer. It depends on Mg(2+) as a cofactor.

It is found in the plastid. The protein localises to the chloroplast. Functionally, endonuclease involved in intron homing. Recognizes a degenerate sequence of 17-19 bp to produce a staggered cut 5 bp downstream from the CeLSU.5 intron insertion site. The sequence is that of DNA endonuclease I-CeuI from Chlamydomonas moewusii (Chlamydomonas eugametos).